Reading from the N-terminus, the 228-residue chain is Lipoprotein-releasing system ATP-binding protein LolD (228 aa).

The ABC transporter domain maps to 5–228 (LRCHQVCKTY…DGLLTDITGA (224 aa)). ATP is bound at residue 41–48 (GSSGSGKS).

This sequence belongs to the ABC transporter superfamily. Lipoprotein translocase (TC 3.A.1.125) family. As to quaternary structure, the complex is composed of two ATP-binding proteins (LolD) and two transmembrane proteins (LolC and LolE).

It localises to the cell inner membrane. Its function is as follows. Part of the ABC transporter complex LolCDE involved in the translocation of mature outer membrane-directed lipoproteins, from the inner membrane to the periplasmic chaperone, LolA. Responsible for the formation of the LolA-lipoprotein complex in an ATP-dependent manner. This chain is Lipoprotein-releasing system ATP-binding protein LolD, found in Vibrio cholerae serotype O1 (strain ATCC 39315 / El Tor Inaba N16961).